Here is a 373-residue protein sequence, read N- to C-terminus: Glutamate 5-kinase (373 aa).

Lysine 12 is a binding site for ATP. Residues serine 52, aspartate 139, and asparagine 154 each contribute to the substrate site. Residue threonine 216–lysine 222 coordinates ATP. Positions arginine 281–asparagine 359 constitute a PUA domain.

Belongs to the glutamate 5-kinase family.

Its subcellular location is the cytoplasm. The catalysed reaction is L-glutamate + ATP = L-glutamyl 5-phosphate + ADP. It functions in the pathway amino-acid biosynthesis; L-proline biosynthesis; L-glutamate 5-semialdehyde from L-glutamate: step 1/2. Catalyzes the transfer of a phosphate group to glutamate to form L-glutamate 5-phosphate. The chain is Glutamate 5-kinase from Dehalococcoides mccartyi (strain CBDB1).